Consider the following 2156-residue polypeptide: MAM and LDL-receptor class A domain-containing protein 1 (2156 aa).

A signal peptide spans 1 to 31 (MLFFLDRMLAFPMNETFCCLWIACVFNSTLA). At 32-2076 (QQGTESFQCD…FTYAQNNTWT (2045 aa)) the chain is on the vesicular side. The 36-residue stretch at 33–68 (QGTESFQCDNGVSLPPDSICDFTDQCGDSSDERHCL) folds into the LDL-receptor class A 1 domain. 2 cysteine pairs are disulfide-bonded: C40–C58 and C52–C67. MAM domains lie at 71–229 (ERCD…GCLP) and 268–427 (QACG…ACGQ). An LDL-receptor class A 2 domain is found at 433 to 471 (LCSADEFPCTSGQCIAKESVCDSRQDCSDESDEDPATCS). 3 disulfides stabilise this stretch: C434–C446, C441–C459, and C453–C470. MAM domains are found at residues 474-637 (LTCD…ECEI) and 652-816 (SKCD…NCTL). N813 carries an N-linked (GlcNAc...) asparagine glycan. The LDL-receptor class A 3 domain maps to 822–860 (SCEGLDHFWCRHTRACIEKLRLCDLVDDCGDRTDEVNCA). Disulfide bonds link C823–C837, C831–C850, and C844–C859. An MAM 5 domain is found at 863–1024 (LQCNFETGIC…DDLSFMDCTL (162 aa)). N1049 carries N-linked (GlcNAc...) asparagine glycosylation. The LDL-receptor class A 4 domain maps to 1049-1086 (NCTDNEFICRSDGHCIEKMQKCDFKYDCPDKSDEASCV). Disulfide bonds link C1050-C1063, C1057-C1076, and C1070-C1085. Residues 1088-1256 (EVCSFEKRSL…DDISFQDCSP (169 aa)) form the MAM 6 domain. N1199 carries an N-linked (GlcNAc...) asparagine glycan. The region spanning 1263-1301 (KCTDHEFMCANKHCIAKDKLCDFVNDCADNSDETTFICR) is the LDL-receptor class A 5 domain. 3 disulfides stabilise this stretch: C1264–C1276, C1271–C1289, and C1283–C1300. The 161-residue stretch at 1305-1465 (GRCDFEFDLC…DIVLTENCLS (161 aa)) folds into the MAM 7 domain. N-linked (GlcNAc...) asparagine glycosylation occurs at N1414. One can recognise an LDL-receptor class A 6 domain in the interval 1482-1518 (FCPLGYRECHNGKCYRLEQSCNFVDNCGDNTDENECG). 3 disulfide bridges follow: C1483-C1495, C1490-C1508, and C1502-C1517. The 158-residue stretch at 1519 to 1676 (SSCTFEKGWC…DDIEFKNCTT (158 aa)) folds into the MAM 8 domain. The region spanning 1683 to 1720 (LCPEITDFLCRDKKCIASHLLCDYKPDCSDRSDEAHCA) is the LDL-receptor class A 7 domain. 3 cysteine pairs are disulfide-bonded: C1684-C1697, C1692-C1710, and C1704-C1719. An MAM 9 domain is found at 1727-1892 (GSCNFETSSG…DISFTPECVT (166 aa)). 3 consecutive LDL-receptor class A domains span residues 1902–1939 (PCEADQFSCIYTLQCVPLSGKCDGHEDCIDGSDEMDCP), 1946–1982 (LCSNMEFPCSTDECIPSLLLCDGVPDCHFNEDELICS), and 1985–2023 (SCSNGALVCASSNSCIPAHQRCDGFADCMDFQLDESSCS). Intrachain disulfides connect C1903–C1916, C1910–C1929, C1923–C1938, C1947–C1959, C1954–C1972, C1966–C1981, C1986–C1999, C1993–C2012, C2006–C2022, C2025–C2036, C2030–C2045, and C2047–C2056. In terms of domain architecture, EGF-like spans 2024 to 2057 (ECPLNYCRNGGTCVVEKNGPMCRCRQGWKGNRCH). The helical transmembrane segment at 2077–2097 (LLGIGLAFLMTHITVAVLCFL) threads the bilayer. Residues 2098–2156 (ANRKVPIRKTEGSGNCAFVNPVYGNWSNPEKTESSVYSFSNPLYGTTSGSLETLSHHLK) are Cytoplasmic-facing.

In terms of assembly, interacts with FGF19. In terms of tissue distribution, strongly expressed in the small intestine.

The protein resides in the cytoplasmic vesicle membrane. In terms of biological role, enhances production and/or transport of FGF19 and thus has a role in regulation of bile acid synthesis. The polypeptide is MAM and LDL-receptor class A domain-containing protein 1 (Homo sapiens (Human)).